Reading from the N-terminus, the 307-residue chain is Nuclear polyadenylated RNA-binding protein nab2 (307 aa).

Residues 102–135 are disordered; that stretch reads STDKSQQSFSVPETSIQPQSSQTPNITSLREEKE. The span at 105–129 shows a compositional bias: polar residues; sequence KSQQSFSVPETSIQPQSSQTPNITS. 3 consecutive C3H1-type zinc fingers follow at residues 178–202, 217–232, and 254–268; these read TQEV…HPTP, CASG…VKGH, and CKYK…RFIH. The interval 274-307 is disordered; the sequence is NMTWRPPSKTEETSLSERSFAVNESEEQLHVPSV.

Belongs to the ZC3H14 family.

It localises to the nucleus. Functionally, RNA-binding protein involved in RNA processing. Acts as a regulator of mRNA stability: binds to mRNAs and pre-mRNAs, preventing their degradation. Involved in the biogenesis of circular RNAs (circRNAs) which are produced by back-splicing circularization of pre-mRNAs. This chain is Nuclear polyadenylated RNA-binding protein nab2, found in Schizosaccharomyces pombe (strain 972 / ATCC 24843) (Fission yeast).